Here is a 141-residue protein sequence, read N- to C-terminus: Ribosome-binding factor A (141 aa).

The protein belongs to the RbfA family. As to quaternary structure, monomer. Binds 30S ribosomal subunits, but not 50S ribosomal subunits or 70S ribosomes.

The protein localises to the cytoplasm. Functionally, one of several proteins that assist in the late maturation steps of the functional core of the 30S ribosomal subunit. Associates with free 30S ribosomal subunits (but not with 30S subunits that are part of 70S ribosomes or polysomes). Required for efficient processing of 16S rRNA. May interact with the 5'-terminal helix region of 16S rRNA. The chain is Ribosome-binding factor A from Beijerinckia indica subsp. indica (strain ATCC 9039 / DSM 1715 / NCIMB 8712).